A 431-amino-acid polypeptide reads, in one-letter code: Enolase (431 aa).

Q166 serves as a coordination point for (2R)-2-phosphoglycerate. Catalysis depends on E208, which acts as the Proton donor. The Mg(2+) site is built by D245, E288, and D315. The (2R)-2-phosphoglycerate site is built by K340, R369, S370, and K391. K340 functions as the Proton acceptor in the catalytic mechanism.

Belongs to the enolase family. It depends on Mg(2+) as a cofactor.

The protein resides in the cytoplasm. The protein localises to the secreted. It localises to the cell surface. It catalyses the reaction (2R)-2-phosphoglycerate = phosphoenolpyruvate + H2O. The protein operates within carbohydrate degradation; glycolysis; pyruvate from D-glyceraldehyde 3-phosphate: step 4/5. Functionally, catalyzes the reversible conversion of 2-phosphoglycerate (2-PG) into phosphoenolpyruvate (PEP). It is essential for the degradation of carbohydrates via glycolysis. This Clostridium botulinum (strain 657 / Type Ba4) protein is Enolase.